The chain runs to 349 residues: 1-acylglycerol-3-phosphate O-acyltransferase ABHD5 (349 aa).

At Ala-2 the chain carries N-acetylalanine. The region spanning 77–184 (PLVLLHGFGG…LVEPWGFPER (108 aa)) is the AB hydrolase-1 domain. Ser-122 is subject to Phosphoserine. The HXXXXD motif motif lies at 327–332 (HYVYAD).

Belongs to the peptidase S33 family. ABHD4/ABHD5 subfamily. Interacts with ADRP, PLIN and PNPLA2. Interacts with PLIN5; promotes interaction with PNPLA2.

Its subcellular location is the cytoplasm. The protein resides in the lipid droplet. The catalysed reaction is a 1-acyl-sn-glycero-3-phosphate + an acyl-CoA = a 1,2-diacyl-sn-glycero-3-phosphate + CoA. It carries out the reaction 1-(9Z-octadecenoyl)-sn-glycero-3-phosphate + (9Z)-octadecenoyl-CoA = 1,2-di-(9Z-octadecenoyl)-sn-glycero-3-phosphate + CoA. The enzyme catalyses 1-(9Z-octadecenoyl)-sn-glycero-3-phosphate + hexadecanoyl-CoA = 1-(9Z)-octadecenoyl-2-hexadecanoyl-sn-glycero-3-phosphate + CoA. It catalyses the reaction 1-(9Z-octadecenoyl)-sn-glycero-3-phosphate + octadecanoyl-CoA = 1-(9Z-octadecenoyl)-2-octadecanoyl-sn-glycero-3-phosphate + CoA. The catalysed reaction is 1-(9Z-octadecenoyl)-sn-glycero-3-phosphate + (5Z,8Z,11Z,14Z)-eicosatetraenoyl-CoA = 1-(9Z)-octadecenoyl-2-(5Z,8Z,11Z,14Z)-eicosatetraenoyl-sn-glycero-3-phosphate + CoA. It carries out the reaction eicosanoyl-CoA + 1-(9Z-octadecenoyl)-sn-glycero-3-phosphate = 1-(9Z)-octadecenoyl-2-eicosanoyl-sn-glycero-3-phosphate + CoA. The enzyme catalyses 1-hexadecanoyl-sn-glycero-3-phosphate + (9Z)-octadecenoyl-CoA = 1-hexadecanoyl-2-(9Z-octadecenoyl)-sn-glycero-3-phosphate + CoA. It catalyses the reaction 1-octadecanoyl-sn-glycero-3-phosphate + (9Z)-octadecenoyl-CoA = 1-octadecanoyl-2-(9Z-octadecenoyl)-sn-glycero-3-phosphate + CoA. The catalysed reaction is 1-(5Z,8Z,11Z,14Z-eicosatetraenoyl)-sn-glycero-3-phosphate + (9Z)-octadecenoyl-CoA = 1-(5Z,8Z,11Z,14Z)-eicosatetraenoyl-2-(9Z)-octadecenoyl-sn-glycero-3-phosphate + CoA. Its activity is regulated as follows. Acyltransferase activity is inhibited by detergents such as Triton X-100 and 3-[(3-cholamidopropyl)dimethylammonio]-1-propanesulfonate (CHAPS). Acyltransferase activity is inhibited by the presence of magnesium and calcium. In terms of biological role, coenzyme A-dependent lysophosphatidic acid acyltransferase that catalyzes the transfer of an acyl group on a lysophosphatidic acid. Functions preferentially with 1-oleoyl-lysophosphatidic acid followed by 1-palmitoyl-lysophosphatidic acid, 1-stearoyl-lysophosphatidic acid and 1-arachidonoyl-lysophosphatidic acid as lipid acceptor. Functions preferentially with arachidonoyl-CoA followed by oleoyl-CoA as acyl group donors. Functions in phosphatidic acid biosynthesis. May regulate the cellular storage of triacylglycerol through activation of the phospholipase PNPLA2. Involved in keratinocyte differentiation. Regulates lipid droplet fusion. This chain is 1-acylglycerol-3-phosphate O-acyltransferase ABHD5, found in Pongo abelii (Sumatran orangutan).